A 321-amino-acid chain; its full sequence is Probable heme-iron transport system permease protein IsdF (321 aa).

The next 9 membrane-spanning stretches (helical) occupy residues 9–29, 61–81, 89–109, 114–134, 143–163, 179–199, 233–253, 267–287, and 294–314; these read LLFLCLLVILIATAYISFVTG, ILIALMVGAMLAVSGALLQAA, ANIIGVSSGALIMRALCMLFI, FYLPLLSFIGGLIPFLIIILL, VSMILVGVALFVLLNGVLEIL, IWSDVYILAVSALLGLILTLL, VFLASATVAIVGQLAFLGIIV, LIPFSTVIGAWLLLVADLLGR, and EIPANAILMIVGGPMLIYLIC.

It belongs to the binding-protein-dependent transport system permease family. FecCD subfamily.

The protein resides in the cell membrane. Part of the binding-protein-dependent transport system for heme-iron. Responsible for the translocation of the substrate across the membrane. The polypeptide is Probable heme-iron transport system permease protein IsdF (isdF) (Staphylococcus aureus (strain NCTC 8325 / PS 47)).